A 99-amino-acid chain; its full sequence is Protein S100-A11 (99 aa).

An N-acetylmethionine modification is found at Met-1. A Phosphothreonine modification is found at Thr-8. 2 consecutive EF-hand domains span residues 10–47 (RCIESLIAIFQKHAGRDGNNTKISKTEFLIFMNTELAA) and 53–88 (KDPGVLDRMMKKLDLDSDGQLDFQEFLNLIGGLAIA). Ca(2+) is bound by residues Asn-29, Lys-31, Glu-36, Asp-66, Asp-68, Asp-70, Gln-72, and Glu-77.

This sequence belongs to the S-100 family. Homodimer; disulfide-linked. Phosphorylation at Thr-8 significantly suppresses homodimerization and promotes association with NCL/nucleolin which induces nuclear translocation.

It is found in the cytoplasm. The protein resides in the nucleus. Its function is as follows. Facilitates the differentiation and the cornification of keratinocytes. In Sus scrofa (Pig), this protein is Protein S100-A11 (S100A11).